A 266-amino-acid polypeptide reads, in one-letter code: Prolactin-7A1 (266 aa).

Positions 1-30 are cleaved as a signal peptide; sequence MPLSFTQPCSSGALLLLVVSNLLLWENVAC. N36, N58, N110, N149, and N157 each carry an N-linked (GlcNAc...) asparagine glycan. Intrachain disulfides connect C114-C231 and C248-C257.

It belongs to the somatotropin/prolactin family. In terms of tissue distribution, expressed specifically in the placenta. Detected only in the trophoblast giant cells.

It localises to the secreted. The chain is Prolactin-7A1 (Prl7a1) from Mus musculus (Mouse).